Here is a 247-residue protein sequence, read N- to C-terminus: 5-oxoprolinase subunit A (247 aa).

The protein belongs to the LamB/PxpA family. In terms of assembly, forms a complex composed of PxpA, PxpB and PxpC.

It catalyses the reaction 5-oxo-L-proline + ATP + 2 H2O = L-glutamate + ADP + phosphate + H(+). Functionally, catalyzes the cleavage of 5-oxoproline to form L-glutamate coupled to the hydrolysis of ATP to ADP and inorganic phosphate. The protein is 5-oxoprolinase subunit A of Histophilus somni (strain 129Pt) (Haemophilus somnus).